The chain runs to 147 residues: Protein archease (147 aa).

The Ca(2+) site is built by D17, D146, and V147.

Belongs to the archease family.

Activates the tRNA-splicing ligase complex by facilitating the enzymatic turnover of catalytic subunit RtcB. Acts by promoting the guanylylation of RtcB, a key intermediate step in tRNA ligation. Can also alter the NTP specificity of RtcB such that ATP, dGTP or ITP is used efficiently. The sequence is that of Protein archease from Pyrobaculum islandicum (strain DSM 4184 / JCM 9189 / GEO3).